Here is a 130-residue protein sequence, read N- to C-terminus: MAAPVKKTGSKKSKKNVPNGVVHIQSTFNNTIVSITDTSGHVISWSSAGASGFKGARKGTPFAAQTAAEAAAKRALDQGMRQIKVLVRGPGSGRETAIRALQVAGLEITLIRDVTPLPHNGCRRPKRRRV.

Belongs to the universal ribosomal protein uS11 family. Part of the 30S ribosomal subunit. Interacts with proteins S7 and S18. Binds to IF-3.

Located on the platform of the 30S subunit, it bridges several disparate RNA helices of the 16S rRNA. Forms part of the Shine-Dalgarno cleft in the 70S ribosome. This is Small ribosomal subunit protein uS11 from Prochlorococcus marinus subsp. pastoris (strain CCMP1986 / NIES-2087 / MED4).